We begin with the raw amino-acid sequence, 663 residues long: MFATFNSSMDNRSSANSPVAPSSRPKRTTVARACDWCRLNRVKCDDGQPCKNCRTRGVRCRKGSKSGEHNRPSSSAAASERARSQGAQMEPNQGNARAEEREKAATTSRRNSRTPSSSPSSPSPSQWRWPGAWIVDSVHTNSEPRYYGPSSFLHFTNRLRIYLDESLGQPQLGNALLSFTCSRVSSPSPNAMDDADLTEGTLTRQQEEYLLSLYWQSYHTIIPIVDADDFCAHYRSLWEPGQGATRRPSALVDIVLALCMQYSAALMASGDIELMDLESNDTNASGHWLYQRCQRLLLKDQDTLSLATLQTYIHSAVYLMNASCLNASHRVLSIAIHTATSLGLPHSPEGHPRGPQHALRQRIWWTLFFLDSKMSFELGQPYLMPEYHGTVDLSGSLELRIIENCRSVSTFGDITWLRYHDECLKLTSKVRHISNVAFEKSSEAMSRHSGTSIYENPSALEKGVSYLHKSMEALQAWSREVPTSLKLARKGNVSPFSTARCPLENDVYAPLWLQRQRVLLELLYHNLVMGLYRPYIRVADQSAVTSHAIGPTASHTSDSSSLCALNHAMATINIVYQVLTETDILNSWNRAFQYTWDATLTVLGFRLVHPGCPHSFSARRATAIANESFKIFSQYGYSGAAQAMTVTRELDRSIDLAVSREPG.

Over residues 1 to 20 (MFATFNSSMDNRSSANSPVA) the composition is skewed to polar residues. Disordered regions lie at residues 1-28 (MFATFNSSMDNRSSANSPVAPSSRPKRT) and 55-126 (TRGV…SPSQ). The zn(2)-C6 fungal-type DNA-binding region spans 34-60 (CDWCRLNRVKCDDGQPCKNCRTRGVRC). Basic residues predominate over residues 55–64 (TRGVRCRKGS). Low complexity-rich tracts occupy residues 73–88 (SSSAAASERARSQGAQ) and 105–125 (ATTSRRNSRTPSSSPSSPSPS).

The protein resides in the nucleus. In terms of biological role, transcription factor that regulates the expression of the gene cluster that mediates the biosynthesis of terreic acid, a quinone epoxide inhibitor of Bruton's tyrosine kinase. This Aspergillus terreus (strain NIH 2624 / FGSC A1156) protein is Terreic acid cluster-specific transcription factor atF.